Consider the following 170-residue polypeptide: NADH-ubiquinone oxidoreductase chain 2 (170 aa).

Transmembrane regions (helical) follow at residues 24–44, 67–87, 101–121, and 150–170; these read LLWM…IMMF, FLIF…GFLP, LFIL…YLRL, and LILN…YMIL.

Belongs to the complex I subunit 2 family.

It localises to the mitochondrion inner membrane. It carries out the reaction a ubiquinone + NADH + 5 H(+)(in) = a ubiquinol + NAD(+) + 4 H(+)(out). Functionally, core subunit of the mitochondrial membrane respiratory chain NADH dehydrogenase (Complex I) that is believed to belong to the minimal assembly required for catalysis. Complex I functions in the transfer of electrons from NADH to the respiratory chain. The immediate electron acceptor for the enzyme is believed to be ubiquinone. In Anopheles albimanus (New world malaria mosquito), this protein is NADH-ubiquinone oxidoreductase chain 2 (ND2).